Here is a 412-residue protein sequence, read N- to C-terminus: MAQLDPKTINKIVLAYSGGLDTSIIARWLQETYDAEVITFTADIGQGEEVEPARAKAEAMGIKHIHIEDLREEFARDYVFPMFRANAIYEGEYLLGTSIARPLIAKRLVEIAKEHNADAISHGATGKGNDQVRFELGAVALSPDVVTIAPWREWDLSSRESLMEYAKEHNIAIDYAGNKKKSPYSMDANLLHISYEGGILEDPYAEAEDDMWRWSVSPEEAPDEAQYLELEYEKGDIVAIDGEALKPYEVMIKLNEIGGKHGIGRLDIVENRYVGMKSRGCYETPAGTIMLKAHRGIESLTLDREAAHLKDELMPRYAKTIYNGYWFSPERMMLQALIDKSQEYVNGTVRVKLYKGAVSVVGRKSDDSLFDEKIATFEDDAGAYDQKDAEGFIRLNGLRLAIEASRGRDLSK.

ATP-binding positions include 15-23 (AYSGGLDTS) and Ala42. Positions 93 and 98 each coordinate L-citrulline. Gly123 is an ATP binding site. Positions 125, 129, and 130 each coordinate L-aspartate. Asn129 provides a ligand contact to L-citrulline. 5 residues coordinate L-citrulline: Arg133, Ser185, Ser194, Glu270, and Tyr282.

Belongs to the argininosuccinate synthase family. Type 1 subfamily. In terms of assembly, homotetramer.

It is found in the cytoplasm. The catalysed reaction is L-citrulline + L-aspartate + ATP = 2-(N(omega)-L-arginino)succinate + AMP + diphosphate + H(+). The protein operates within amino-acid biosynthesis; L-arginine biosynthesis; L-arginine from L-ornithine and carbamoyl phosphate: step 2/3. The protein is Argininosuccinate synthase of Psychrobacter cryohalolentis (strain ATCC BAA-1226 / DSM 17306 / VKM B-2378 / K5).